The following is a 294-amino-acid chain: Cytidine deaminase (294 aa).

2 consecutive CMP/dCMP-type deaminase domains span residues 48 to 168 (DEDA…FGPK) and 186 to 294 (LTGD…VLLA). 89–91 (NME) provides a ligand contact to substrate. His-102 contributes to the Zn(2+) binding site. Glu-104 acts as the Proton donor in catalysis. Zn(2+) is bound by residues Cys-129 and Cys-132.

It belongs to the cytidine and deoxycytidylate deaminase family. In terms of assembly, homodimer. Zn(2+) serves as cofactor.

It catalyses the reaction cytidine + H2O + H(+) = uridine + NH4(+). The catalysed reaction is 2'-deoxycytidine + H2O + H(+) = 2'-deoxyuridine + NH4(+). Its function is as follows. This enzyme scavenges exogenous and endogenous cytidine and 2'-deoxycytidine for UMP synthesis. This chain is Cytidine deaminase, found in Escherichia coli O139:H28 (strain E24377A / ETEC).